We begin with the raw amino-acid sequence, 241 residues long: MKNQNVAIIIPSRLNSTRLIQKPLQLIGSITLIERVFKQVNKANIQHTYVATDSEEIANIIKKIGGKVILTDSDIPTGTDRTYEAFKLIPNNNNIHYIINVQGDIPFIEHRSILKIIEYLKNSEYDIVTPVVRVDRESIEASSNVTVAVDYMGKALYFSRSLIPHGAEELLYHLGIYGFRKNALEKFVSLKQTFLEKTERLEQLRILENGMTIGTCLVEDVPISVDTEEDLKKAIKFCREN.

This sequence belongs to the KdsB family.

It is found in the cytoplasm. It carries out the reaction 3-deoxy-alpha-D-manno-oct-2-ulosonate + CTP = CMP-3-deoxy-beta-D-manno-octulosonate + diphosphate. The protein operates within nucleotide-sugar biosynthesis; CMP-3-deoxy-D-manno-octulosonate biosynthesis; CMP-3-deoxy-D-manno-octulosonate from 3-deoxy-D-manno-octulosonate and CTP: step 1/1. It functions in the pathway bacterial outer membrane biogenesis; lipopolysaccharide biosynthesis. In terms of biological role, activates KDO (a required 8-carbon sugar) for incorporation into bacterial lipopolysaccharide in Gram-negative bacteria. The sequence is that of 3-deoxy-manno-octulosonate cytidylyltransferase from Rickettsia typhi (strain ATCC VR-144 / Wilmington).